A 404-amino-acid polypeptide reads, in one-letter code: Probable tRNA sulfurtransferase (404 aa).

One can recognise a THUMP domain in the interval 60–165; sequence EEVIPKLSKV…KDAAYLSYET (106 aa). Residues 183–184, 208–209, arginine 265, glycine 287, and glutamine 296 each bind ATP; these read ML and HF.

Belongs to the ThiI family.

It localises to the cytoplasm. It catalyses the reaction [ThiI sulfur-carrier protein]-S-sulfanyl-L-cysteine + a uridine in tRNA + 2 reduced [2Fe-2S]-[ferredoxin] + ATP + H(+) = [ThiI sulfur-carrier protein]-L-cysteine + a 4-thiouridine in tRNA + 2 oxidized [2Fe-2S]-[ferredoxin] + AMP + diphosphate. The catalysed reaction is [ThiS sulfur-carrier protein]-C-terminal Gly-Gly-AMP + S-sulfanyl-L-cysteinyl-[cysteine desulfurase] + AH2 = [ThiS sulfur-carrier protein]-C-terminal-Gly-aminoethanethioate + L-cysteinyl-[cysteine desulfurase] + A + AMP + 2 H(+). Its pathway is cofactor biosynthesis; thiamine diphosphate biosynthesis. Its function is as follows. Catalyzes the ATP-dependent transfer of a sulfur to tRNA to produce 4-thiouridine in position 8 of tRNAs, which functions as a near-UV photosensor. Also catalyzes the transfer of sulfur to the sulfur carrier protein ThiS, forming ThiS-thiocarboxylate. This is a step in the synthesis of thiazole, in the thiamine biosynthesis pathway. The sulfur is donated as persulfide by IscS. The sequence is that of Probable tRNA sulfurtransferase from Enterococcus faecalis (strain ATCC 700802 / V583).